Here is a 335-residue protein sequence, read N- to C-terminus: Nucleoid-associated protein YejK (335 aa).

This sequence belongs to the YejK family.

It localises to the cytoplasm. The protein localises to the nucleoid. This is Nucleoid-associated protein YejK from Salmonella arizonae (strain ATCC BAA-731 / CDC346-86 / RSK2980).